Reading from the N-terminus, the 553-residue chain is Mucolipin-3 (553 aa).

Topologically, residues M1–K62 are cytoplasmic. The interval K52–K62 is interaction with phosphoinositides. Residues L63–S83 traverse the membrane as a helical segment. Over N84–H283 the chain is Extracellular. The interval K104–T118 is extracellular/lumenal pore loop. Residue N138 is glycosylated (N-linked (GlcNAc...) asparagine). C159 and C185 are disulfide-bonded. N205 is a glycosylation site (N-linked (GlcNAc...) asparagine). The cysteines at positions 238 and 269 are disulfide-linked. Residues N284–I304 form a helical membrane-spanning segment. At R305–W341 the chain is on the cytoplasmic side. The helical transmembrane segment at Y342–I362 threads the bilayer. The Extracellular portion of the chain corresponds to Q363–D371. A helical transmembrane segment spans residues V372–L392. At G393–R414 the chain is on the cytoplasmic side. Residues F415–G435 traverse the membrane as a helical segment. The Extracellular segment spans residues P436–S443. An intramembrane region (pore-forming) is located at residues L444–F464. The Selectivity filter signature appears at N456–D459. The Extracellular portion of the chain corresponds to A465 to W475. A helical transmembrane segment spans residues L476 to F497. At I498–K553 the chain is on the cytoplasmic side.

This sequence belongs to the transient receptor (TC 1.A.4) family. Polycystin subfamily. MCOLN3 sub-subfamily. As to quaternary structure, homotetramer. Can heterooligomerize with MCOLN1; heteromeric assemblies have different channel properties as compared to the respective homooligomers and may be tissue-specific. May heterooligomerize with TRPV5 to form a functional distinct ion channel. Interacts with GABARAPL2. Post-translationally, N-glycosylated.

It localises to the lysosome membrane. The protein localises to the early endosome membrane. Its subcellular location is the late endosome membrane. It is found in the cytoplasmic vesicle. The protein resides in the autophagosome membrane. It localises to the cell projection. The protein localises to the stereocilium membrane. It carries out the reaction Ca(2+)(in) = Ca(2+)(out). The catalysed reaction is Mg(2+)(in) = Mg(2+)(out). The enzyme catalyses K(+)(in) = K(+)(out). It catalyses the reaction Na(+)(in) = Na(+)(out). With respect to regulation, channel activity is activated by PtdIns(3,5)P2 (phosphatidylinositol 3,5-bisphosphate). Inhibited by lumenal H(+) and Na(+). The channel pore shows dynamic behavior and undergoes spontaneous, Ca(2+)-dependent modulation when conducting Ca(2+). Nonselective cation channel probably playing a role in the regulation of membrane trafficking events. Acts as a Ca(2+)-permeable cation channel with inwardly rectifying activity. Mediates release of Ca(2+) from endosomes to the cytoplasm, contributes to endosomal acidification and is involved in the regulation of membrane trafficking and fusion in the endosomal pathway. Also permeable to Mg(2+), Na(+) and K(+). Does not seem to act as mechanosensory transduction channel in inner ear sensory hair cells. Proposed to play a critical role at the cochlear stereocilia ankle-link region during hair-bundle growth. Involved in the regulation of autophagy. Through association with GABARAPL2 may be involved in autophagosome formation possibly providing Ca(2+) for the fusion process. Through a possible and probably tissue-specific heteromerization with MCOLN1 may be at least in part involved in many lysosome-dependent cellular events. Possible heteromeric ion channel assemblies with TRPV5 show pharmacological similarity with TRPML3. The protein is Mucolipin-3 of Callithrix jacchus (White-tufted-ear marmoset).